The primary structure comprises 322 residues: DNA primase small subunit PriS (322 aa).

Catalysis depends on residues D100, D102, and D228.

Belongs to the eukaryotic-type primase small subunit family. In terms of assembly, heterodimer of a small subunit (PriS) and a large subunit (PriL). Mg(2+) is required as a cofactor. The cofactor is Mn(2+).

Functionally, catalytic subunit of DNA primase, an RNA polymerase that catalyzes the synthesis of short RNA molecules used as primers for DNA polymerase during DNA replication. The small subunit contains the primase catalytic core and has DNA synthesis activity on its own. Binding to the large subunit stabilizes and modulates the activity, increasing the rate of DNA synthesis while decreasing the length of the DNA fragments, and conferring RNA synthesis capability. The DNA polymerase activity may enable DNA primase to also catalyze primer extension after primer synthesis. May also play a role in DNA repair. This is DNA primase small subunit PriS from Sulfolobus acidocaldarius (strain ATCC 33909 / DSM 639 / JCM 8929 / NBRC 15157 / NCIMB 11770).